Here is a 275-residue protein sequence, read N- to C-terminus: Formamidopyrimidine-DNA glycosylase (275 aa).

The active-site Schiff-base intermediate with DNA is Pro-2. Glu-3 serves as the catalytic Proton donor. Lys-59 acts as the Proton donor; for beta-elimination activity in catalysis. Residues His-93, Arg-112, and Arg-153 each contribute to the DNA site. The FPG-type zinc-finger motif lies at 238–272; it reads NVYDRVGKPCPRCQTAIERIVVAQRSTFFCPLCQV. Arg-262 functions as the Proton donor; for delta-elimination activity in the catalytic mechanism.

This sequence belongs to the FPG family. As to quaternary structure, monomer. It depends on Zn(2+) as a cofactor.

The catalysed reaction is Hydrolysis of DNA containing ring-opened 7-methylguanine residues, releasing 2,6-diamino-4-hydroxy-5-(N-methyl)formamidopyrimidine.. It carries out the reaction 2'-deoxyribonucleotide-(2'-deoxyribose 5'-phosphate)-2'-deoxyribonucleotide-DNA = a 3'-end 2'-deoxyribonucleotide-(2,3-dehydro-2,3-deoxyribose 5'-phosphate)-DNA + a 5'-end 5'-phospho-2'-deoxyribonucleoside-DNA + H(+). Functionally, involved in base excision repair of DNA damaged by oxidation or by mutagenic agents. Acts as a DNA glycosylase that recognizes and removes damaged bases. Has a preference for oxidized purines, such as 7,8-dihydro-8-oxoguanine (8-oxoG). Has AP (apurinic/apyrimidinic) lyase activity and introduces nicks in the DNA strand. Cleaves the DNA backbone by beta-delta elimination to generate a single-strand break at the site of the removed base with both 3'- and 5'-phosphates. This chain is Formamidopyrimidine-DNA glycosylase, found in Chloroflexus aggregans (strain MD-66 / DSM 9485).